The chain runs to 790 residues: Phenylalanine--tRNA ligase beta subunit (790 aa).

Positions 39 to 147 (AKPFSGIVVG…ADAPVGVDVR (109 aa)) constitute a tRNA-binding domain. Residues 400-476 (PAKALVNLRH…RLYGYNKLPV (77 aa)) enclose the B5 domain. Mg(2+) is bound by residues aspartate 454, aspartate 460, glutamate 463, and glutamate 464. One can recognise an FDX-ACB domain in the interval 696 to 789 (SRFPEIRRDL…LGNRFGASLR (94 aa)).

The protein belongs to the phenylalanyl-tRNA synthetase beta subunit family. Type 1 subfamily. In terms of assembly, tetramer of two alpha and two beta subunits. Requires Mg(2+) as cofactor.

The protein localises to the cytoplasm. The enzyme catalyses tRNA(Phe) + L-phenylalanine + ATP = L-phenylalanyl-tRNA(Phe) + AMP + diphosphate + H(+). This chain is Phenylalanine--tRNA ligase beta subunit, found in Hahella chejuensis (strain KCTC 2396).